Here is a 700-residue protein sequence, read N- to C-terminus: Glycine--tRNA ligase beta subunit (700 aa).

The protein belongs to the class-II aminoacyl-tRNA synthetase family. Tetramer of two alpha and two beta subunits.

It is found in the cytoplasm. The catalysed reaction is tRNA(Gly) + glycine + ATP = glycyl-tRNA(Gly) + AMP + diphosphate. This is Glycine--tRNA ligase beta subunit from Magnetococcus marinus (strain ATCC BAA-1437 / JCM 17883 / MC-1).